The chain runs to 228 residues: Outer membrane protein assembly factor BamE (228 aa).

Positions 1–29 (MNPILKGVYSPARLGVVALTLFGILGVTG) are cleaved as a signal peptide. A lipid anchor (N-palmitoyl cysteine) is attached at Cys30. Cys30 carries S-diacylglycerol cysteine lipidation. Residues 197-228 (DFFGSSKKDPDPQSPQLGPGTLNDVPKPADSK) form a disordered region.

The protein belongs to the BamE family. As to quaternary structure, part of the Bam complex.

The protein resides in the cell outer membrane. Part of the outer membrane protein assembly complex, which is involved in assembly and insertion of beta-barrel proteins into the outer membrane. This chain is Outer membrane protein assembly factor BamE, found in Polynucleobacter necessarius subsp. necessarius (strain STIR1).